The following is a 207-amino-acid chain: Guanylate kinase (207 aa).

Residues 4–184 enclose the Guanylate kinase-like domain; sequence GTLYIVSAPS…ALSDLKTIIR (181 aa). Residue 11-18 participates in ATP binding; that stretch reads APSGAGKS.

The protein belongs to the guanylate kinase family.

Its subcellular location is the cytoplasm. It carries out the reaction GMP + ATP = GDP + ADP. Essential for recycling GMP and indirectly, cGMP. The sequence is that of Guanylate kinase from Salmonella paratyphi A (strain ATCC 9150 / SARB42).